The chain runs to 282 residues: Nucleotide-binding protein PXO_02223 (282 aa).

Gly5–Ser12 serves as a coordination point for ATP. Residue Asp57–Ser60 participates in GTP binding.

It belongs to the RapZ-like family.

In terms of biological role, displays ATPase and GTPase activities. The chain is Nucleotide-binding protein PXO_02223 from Xanthomonas oryzae pv. oryzae (strain PXO99A).